Consider the following 190-residue polypeptide: Putative transcription factor ovo-like protein 3 (190 aa).

Disordered regions lie at residues 1–21 (MPRAFLVRSRRPQPPNWGHLP) and 35–65 (SLGGPPAQQSSSVRDPWTAQPTQGNLTSAPR). Over residues 41 to 62 (AQQSSSVRDPWTAQPTQGNLTS) the composition is skewed to polar residues. 4 C2H2-type zinc fingers span residues 70 to 92 (LGCPLCPKAFPLQRMLTRHLKCH), 98 to 120 (HLCRCCGKGFHDAFDLKRHMRTH), 126 to 149 (FRCSACGKAFTQRCSLEAHLAKVH), and 165 to 187 (HVCEDCGFTSSRPDTYAQHRALH).

The protein belongs to the krueppel C2H2-type zinc-finger protein family.

It localises to the nucleus. Its function is as follows. May act as a transcription regulator. This chain is Putative transcription factor ovo-like protein 3 (OVOL3), found in Homo sapiens (Human).